A 156-amino-acid polypeptide reads, in one-letter code: Small ribosomal subunit protein uS7 (156 aa).

Belongs to the universal ribosomal protein uS7 family. As to quaternary structure, part of the 30S ribosomal subunit. Contacts proteins S9 and S11.

Functionally, one of the primary rRNA binding proteins, it binds directly to 16S rRNA where it nucleates assembly of the head domain of the 30S subunit. Is located at the subunit interface close to the decoding center, probably blocks exit of the E-site tRNA. In Symbiobacterium thermophilum (strain DSM 24528 / JCM 14929 / IAM 14863 / T), this protein is Small ribosomal subunit protein uS7.